Here is a 469-residue protein sequence, read N- to C-terminus: UDP-N-acetylmuramoylalanine--D-glutamate ligase (469 aa).

121 to 127 (GTNGKST) provides a ligand contact to ATP.

This sequence belongs to the MurCDEF family.

Its subcellular location is the cytoplasm. The catalysed reaction is UDP-N-acetyl-alpha-D-muramoyl-L-alanine + D-glutamate + ATP = UDP-N-acetyl-alpha-D-muramoyl-L-alanyl-D-glutamate + ADP + phosphate + H(+). Its pathway is cell wall biogenesis; peptidoglycan biosynthesis. Cell wall formation. Catalyzes the addition of glutamate to the nucleotide precursor UDP-N-acetylmuramoyl-L-alanine (UMA). This is UDP-N-acetylmuramoylalanine--D-glutamate ligase from Agrobacterium fabrum (strain C58 / ATCC 33970) (Agrobacterium tumefaciens (strain C58)).